The primary structure comprises 833 residues: G-type lectin S-receptor-like serine/threonine-protein kinase RKS1 (833 aa).

An N-terminal signal peptide occupies residues 1 to 18; the sequence is MKVVFVIFFFFLFQFCIS. The Bulb-type lectin domain occupies 19-144; the sequence is VDTIMRRQSL…VTGRSFWESF (126 aa). The Extracellular segment spans residues 19–440; it reads VDTIMRRQSL…NGLSGKRRVL (422 aa). Residues N79, N92, N100, N109, N228, and N256 are each glycosylated (N-linked (GlcNAc...) asparagine). In terms of domain architecture, EGF-like spans 280–330; sequence PKEQCDNYAHCGPNGYCDSPSSKTFECTCLPGFEPKFPRHWFLRDSSGGCT. 3 disulfides stabilise this stretch: C284–C296, C290–C306, and C308–C329. Positions 338–421 constitute a PAN domain; that stretch reads CSEKDGFVKL…SGQDFYIRVD (84 aa). 2 N-linked (GlcNAc...) asparagine glycosylation sites follow: N363 and N376. 2 disulfide bridges follow: C369/C396 and C373/C379. The chain crosses the membrane as a helical span at residues 441–461; sequence LILISLIAAVMLLTVILFCVV. Residues 462–833 are Cytoplasmic-facing; that stretch reads RERRKSNRHR…DVTFSDIQGR (372 aa). The Protein kinase domain maps to 515–800; the sequence is FSSQNKLGAG…NLPNPKHPAF (286 aa). ATP is bound by residues 521-529 and K543; that span reads LGAGGFGPV. Phosphoserine occurs at positions 549 and 564. The tract at residues 604–621 is caM-binding; sequence EQRAELDWPKRMEIVRGI. The Proton acceptor role is filled by D640. Phosphoserine occurs at positions 644 and 657. T674 carries the phosphothreonine modification. Phosphoserine is present on residues S717 and S821.

The protein belongs to the protein kinase superfamily. Ser/Thr protein kinase family.

It localises to the cell membrane. The catalysed reaction is L-seryl-[protein] + ATP = O-phospho-L-seryl-[protein] + ADP + H(+). It carries out the reaction L-threonyl-[protein] + ATP = O-phospho-L-threonyl-[protein] + ADP + H(+). This Arabidopsis thaliana (Mouse-ear cress) protein is G-type lectin S-receptor-like serine/threonine-protein kinase RKS1 (RKS1).